Here is a 159-residue protein sequence, read N- to C-terminus: Cathelicidin-5 (159 aa).

The signal sequence occupies residues 1 to 29; that stretch reads METQRASLSLGRWSLWLLLLGLALPSASA. Residue glutamine 30 is modified to Pyrrolidone carboxylic acid. Positions 30–131 are excised as a propeptide; the sequence is QALSYREAVL…DITCAVPQSV (102 aa). Cystine bridges form between cysteine 86-cysteine 97 and cysteine 108-cysteine 125.

It belongs to the cathelicidin family.

It localises to the secreted. Its function is as follows. Exerts a potent antimicrobial activity against Gram-negative and Gram-positive bacteria, including methicillin-resistant Staphylococcus aureus, and fungi. The sequence is that of Cathelicidin-5 (CATHL5) from Bos taurus (Bovine).